We begin with the raw amino-acid sequence, 278 residues long: MMKTHNLFVSCIESRVQDQGSLYARFHIGTFFRGQALTFGNSIRRALLSEMPGFLMTDVRIQGATHEFAVLPDVEETVLEILLNLKKTVFVPRIPKNQKFETFQGFGFLKNNGPGKVRAADIRLPETVQCVSPEVHIATLTSGAELSLRFNLQFRNFSQLEKREGTFKSKTVAQAKTEDGNVQDTTNELPTLEKNSLFFQQLQNKRNSKDQLFLDTVPMPVQKVNYVIKSLNAKNGSEYIILEIWTDGSLYPQESVEFALRNLTDLFFQFANISKKSN.

The protein belongs to the RNA polymerase alpha chain family. In terms of assembly, in plastids the minimal PEP RNA polymerase catalytic core is composed of four subunits: alpha, beta, beta', and beta''. When a (nuclear-encoded) sigma factor is associated with the core the holoenzyme is formed, which can initiate transcription.

It is found in the plastid. It localises to the chloroplast. The enzyme catalyses RNA(n) + a ribonucleoside 5'-triphosphate = RNA(n+1) + diphosphate. Its function is as follows. DNA-dependent RNA polymerase catalyzes the transcription of DNA into RNA using the four ribonucleoside triphosphates as substrates. This is DNA-directed RNA polymerase subunit alpha (rpoA) from Chlorella vulgaris (Green alga).